Here is a 1066-residue protein sequence, read N- to C-terminus: Kinesin-like protein Klp61F (1066 aa).

In terms of domain architecture, Kinesin motor spans 19 to 356 (NIQVYVRVRP…LEYAHRAKNI (338 aa)). An ATP-binding site is contributed by 103-110 (GQTGTGKT). A coiled-coil region spans residues 362–462 (VNQKLTKKTV…KTEENLLNTK (101 aa)). Thr520 is subject to Phosphothreonine. Coiled-coil stretches lie at residues 540–569 (DRMQ…QLSQ), 639–738 (LMSK…QIKN), 808–875 (CSML…LITE), and 889–918 (DLVQ…ELVR). Thr933 is modified (phosphothreonine). Ser949 bears the Phosphoserine mark. Polar residues predominate over residues 990 to 1002 (ELSETETIMNSTP). Disordered regions lie at residues 990 to 1009 (ELSE…VDGV) and 1016 to 1066 (GTTR…ENVA). Low complexity predominate over residues 1033–1051 (GGKRSSSLSRSLTPSKTSP). At Ser1043 the chain carries Phosphoserine. Thr1045 is subject to Phosphothreonine. Phosphoserine is present on residues Ser1050 and Ser1054.

The protein belongs to the TRAFAC class myosin-kinesin ATPase superfamily. Kinesin family. BimC subfamily. In terms of assembly, homotetramer. Consists of two pairs of polypeptides associated by coiled-coil interactions to form two homodimers. The homodimers are linked by lateral interactions between their coiled-coil regions to form a bipolar homotetramer consisting of a central rod with two motor domains projecting from either end. Parallel coiled coils extend from each pair of motor heads, switch to two antiparallel coiled coils in the central region and then back to parallel coiled coils. Interacts with Wee1. In terms of processing, phosphorylation is required for localization to mitotic spindles. Phosphorylation of Thr-933 during mitosis controls association with the spindle apparatus. Phosphorylated in vitro by Wee1.

Its subcellular location is the cytoplasm. The protein localises to the cytoskeleton. It localises to the spindle. The protein resides in the spindle pole. In terms of biological role, important role in mitotic dividing cells. Microtubule motor required for spindle body separation. Slow plus-end directed microtubule motor capable of cross-linking and sliding apart antiparallel microtubules, thereby pushing apart the associated spindle poles during spindle assembly and function. Forms cross-links between microtubules within interpolar microtubule bundles. Contributes to the length of the metaphase spindle, maintains the prometaphase spindle by antagonizing Ncd, drives anaphase B, and also contributes to normal chromosome congression, kinetochore spacing, and anaphase A rates. Displays microtubule-stimulated ATPase activity. Required for normal fusome organization. Required in non-mitotic cells for transport of secretory proteins from the Golgi complex to the cell surface. In Drosophila melanogaster (Fruit fly), this protein is Kinesin-like protein Klp61F.